A 488-amino-acid chain; its full sequence is Coagulation factor X (488 aa).

A signal peptide spans methionine 1–alanine 31. Positions asparagine 32 to arginine 40 are excised as a propeptide. In terms of domain architecture, Gla spans alanine 41–lysine 85. Residues glutamate 46, glutamate 47, glutamate 54, glutamate 56, glutamate 59, glutamate 60, glutamate 65, glutamate 66, glutamate 69, glutamate 72, and glutamate 79 each carry the 4-carboxyglutamate modification. A disulfide bridge links cysteine 57 with cysteine 62. The EGF-like 1; calcium-binding domain occupies aspartate 86–glutamate 122. 11 disulfides stabilise this stretch: cysteine 90–cysteine 101, cysteine 95–cysteine 110, cysteine 112–cysteine 121, cysteine 129–cysteine 140, cysteine 136–cysteine 149, cysteine 151–cysteine 164, cysteine 172–cysteine 342, cysteine 241–cysteine 246, cysteine 261–cysteine 277, cysteine 390–cysteine 404, and cysteine 415–cysteine 443. At aspartate 103 the chain carries (3R)-3-hydroxyaspartate. The region spanning threonine 125–isoleucine 165 is the EGF-like 2 domain. The segment at serine 183 to tyrosine 203 is O-glycosylated at one site. Positions serine 183–arginine 234 are cleaved as a propeptide — activation peptide. Threonine 199 and threonine 211 each carry an O-linked (GalNAc...) threonine glycan. N-linked (GlcNAc...) asparagine glycans are attached at residues asparagine 221 and asparagine 231. One can recognise a Peptidase S1 domain in the interval isoleucine 235–lysine 467. Catalysis depends on charge relay system residues histidine 276 and aspartate 322. Catalysis depends on serine 419, which acts as the Charge relay system. The tract at residues serine 476–serine 485 is O-glycosylated at one site.

Belongs to the peptidase S1 family. The two chains are formed from a single-chain precursor by the excision of two Arg residues and are held together by 1 or more disulfide bonds. Forms a heterodimer with SERPINA5. Interacts (inactive and activated) with ixolaris, an anticoagulant protein from Ixodes scapularis saliva. Interacts (activated) with iripin-8, a serine protease inhibitor from Ixodes ricinus saliva. Interacts (activated) with FXa-directed anticoagulant from Aedes albopictus saliva. Interacts (activated) with guianensin, an anticoagulant protein from Simulium guianense saliva. Interacts (activated) with simukunin, an anticoagulant protein from Simulium vittatum saliva. The vitamin K-dependent, enzymatic carboxylation of some glutamate residues allows the modified protein to bind calcium. Post-translationally, N- and O-glycosylated. O-glycosylated with core 1 or possibly core 8 glycans. In terms of processing, proteolytically cleaved and activated by cathepsin CTSG. The activation peptide is cleaved by factor IXa (in the intrinsic pathway), or by factor VIIa (in the extrinsic pathway). The iron and 2-oxoglutarate dependent 3-hydroxylation of aspartate and asparagine is (R) stereospecific within EGF domains. Plasma; synthesized in the liver.

Its subcellular location is the secreted. The enzyme catalyses Selective cleavage of Arg-|-Thr and then Arg-|-Ile bonds in prothrombin to form thrombin.. With respect to regulation, inhibited by SERPINA5 and SERPINA10. Factor Xa is a vitamin K-dependent glycoprotein that converts prothrombin to thrombin in the presence of factor Va, calcium and phospholipid during blood clotting. Factor Xa activates pro-inflammatory signaling pathways in a protease-activated receptor (PAR)-dependent manner. Up-regulates expression of protease-activated receptors (PARs) F2R, F2RL1 and F2RL2 in dermal microvascular endothelial cells. Triggers the production of pro-inflammatory cytokines, such as MCP-1/CCL2 and IL6, in cardiac fibroblasts and umbilical vein endothelial cells in PAR-1/F2R-dependent manner. Triggers the production of pro-inflammatory cytokines, such as MCP-1/CCL2, IL6, TNF-alpha/TNF, IL-1beta/IL1B, IL8/CXCL8 and IL18, in endothelial cells and atrial tissues. Induces expression of adhesion molecules, such as ICAM1, VCAM1 and SELE, in endothelial cells and atrial tissues. Increases expression of phosphorylated ERK1/2 in dermal microvascular endothelial cells and atrial tissues. Triggers activation of the transcription factor NF-kappa-B in dermal microvascular endothelial cells and atrial tissues. Activates pro-inflammatory and pro-fibrotic responses in dermal fibroblasts and enhances wound healing probably via PAR-2/F2RL1-dependent mechanism. Activates barrier protective signaling responses in endothelial cells in PAR-2/F2RL1-dependent manner; the activity depends on the cleavage of PAR-2/F2RL1 by factor Xa. Up-regulates expression of plasminogen activator inhibitor 1 (SERPINE1) in atrial tissues. The polypeptide is Coagulation factor X (F10) (Homo sapiens (Human)).